The primary structure comprises 297 residues: Probable endonuclease 4 (297 aa).

Zn(2+) is bound by residues His-69, His-110, Glu-145, Asp-179, His-182, His-214, Asp-227, His-229, and Glu-259.

This sequence belongs to the AP endonuclease 2 family. Zn(2+) is required as a cofactor.

It carries out the reaction Endonucleolytic cleavage to 5'-phosphooligonucleotide end-products.. Functionally, endonuclease IV plays a role in DNA repair. It cleaves phosphodiester bonds at apurinic or apyrimidinic (AP) sites, generating a 3'-hydroxyl group and a 5'-terminal sugar phosphate. The sequence is that of Probable endonuclease 4 from Bacillus licheniformis (strain ATCC 14580 / DSM 13 / JCM 2505 / CCUG 7422 / NBRC 12200 / NCIMB 9375 / NCTC 10341 / NRRL NRS-1264 / Gibson 46).